A 407-amino-acid chain; its full sequence is Arginine deiminase (407 aa).

Cysteine 397 serves as the catalytic Amidino-cysteine intermediate.

The protein belongs to the arginine deiminase family.

The protein resides in the cytoplasm. The catalysed reaction is L-arginine + H2O = L-citrulline + NH4(+). It participates in amino-acid degradation; L-arginine degradation via ADI pathway; carbamoyl phosphate from L-arginine: step 1/2. The chain is Arginine deiminase from Pediococcus pentosaceus (strain ATCC 25745 / CCUG 21536 / LMG 10740 / 183-1w).